A 162-amino-acid chain; its full sequence is 2-C-methyl-D-erythritol 2,4-cyclodiphosphate synthase (162 aa).

A divalent metal cation is bound by residues aspartate 9 and histidine 11. Residues 9–11 and 37–38 contribute to the 4-CDP-2-C-methyl-D-erythritol 2-phosphate site; these read DFH and HS. Residue histidine 45 participates in a divalent metal cation binding. Residues 59–61, 64–68, 135–138, and arginine 145 contribute to the 4-CDP-2-C-methyl-D-erythritol 2-phosphate site; these read DIG, FPDTD, and TTSE.

Belongs to the IspF family. In terms of assembly, homotrimer. A divalent metal cation serves as cofactor.

It catalyses the reaction 4-CDP-2-C-methyl-D-erythritol 2-phosphate = 2-C-methyl-D-erythritol 2,4-cyclic diphosphate + CMP. The protein operates within isoprenoid biosynthesis; isopentenyl diphosphate biosynthesis via DXP pathway; isopentenyl diphosphate from 1-deoxy-D-xylulose 5-phosphate: step 4/6. Its function is as follows. Involved in the biosynthesis of isopentenyl diphosphate (IPP) and dimethylallyl diphosphate (DMAPP), two major building blocks of isoprenoid compounds. Catalyzes the conversion of 4-diphosphocytidyl-2-C-methyl-D-erythritol 2-phosphate (CDP-ME2P) to 2-C-methyl-D-erythritol 2,4-cyclodiphosphate (ME-CPP) with a corresponding release of cytidine 5-monophosphate (CMP). The sequence is that of 2-C-methyl-D-erythritol 2,4-cyclodiphosphate synthase from Leptospira biflexa serovar Patoc (strain Patoc 1 / Ames).